The primary structure comprises 942 residues: Valine--tRNA ligase (942 aa).

The 'HIGH' region motif lies at 43 to 53 (PNVTGTLHMGH). The short motif at 551–555 (KMSKS) is the 'KMSKS' region element. Residue Lys-554 participates in ATP binding. Residues 876–942 (EGLVDLDAER…AGLREQRAKL (67 aa)) adopt a coiled-coil conformation.

It belongs to the class-I aminoacyl-tRNA synthetase family. ValS type 1 subfamily. In terms of assembly, monomer.

The protein localises to the cytoplasm. It catalyses the reaction tRNA(Val) + L-valine + ATP = L-valyl-tRNA(Val) + AMP + diphosphate. Its function is as follows. Catalyzes the attachment of valine to tRNA(Val). As ValRS can inadvertently accommodate and process structurally similar amino acids such as threonine, to avoid such errors, it has a 'posttransfer' editing activity that hydrolyzes mischarged Thr-tRNA(Val) in a tRNA-dependent manner. This chain is Valine--tRNA ligase, found in Stenotrophomonas maltophilia (strain R551-3).